Here is a 148-residue protein sequence, read N- to C-terminus: Sperm-specific protein PHI-2B (148 aa).

A compositionally biased stretch (basic residues) spans 1-35 (PSPSRRSRSRSRSRSKSPKRSPAKKARKTPKKRRA). Disordered regions lie at residues 1–44 (PSPS…KPST) and 97–148 (GVLV…KSNN). In terms of domain architecture, H15 spans 40-119 (KKPSTLSMIV…GATGSFRVGK (80 aa)). The segment covering 124 to 148 (PKKKAKKAKSPKKKSSKKSSNKSNN) has biased composition (basic residues).

Belongs to the histone H1/H5 family. Sperm.

Its subcellular location is the nucleus. The protein resides in the chromosome. In terms of biological role, linker histones are implicated in chromatin remodeling and/or transcriptional regulation during spermiogenesis, the process of spermatid maturation into spermatozoa. This is Sperm-specific protein PHI-2B from Mytilus californianus (California mussel).